A 429-amino-acid polypeptide reads, in one-letter code: MDRIRIVGGNRLNGTIPISGAKNAALPLMIAALLTEETLILDNVPRLADVAQLQRILGNHGVDIMSAGKRPGDHEYQGQTLHISAASVIDTTAPYELVSKMRASFWVIAPLLARMHEARVSLPGGCAIGTRPVDLLILALEKLGARIAIDGGYVIASAPAGLRGAEVAFPKVTVSGTHVALMAATLASGTTVITNAACEPEIVDVADCLNKMGARVSGAGTPRIVIEGVGRLGGARHTVLPDRIETGTYAMAVAMTGGEVLLRGARPELLQAALDVLTEAGAEITPNNEGIRVARNGAGINPVTVSTAPFPGFPTDLQAQLMALMTRARGTSHITETIFENRFMHVQELARLGARIHLDGETATIEGIETLRGAPVMATDLRASVSLVIAGLAGEGETMVNRVYHLDRGFEQLEKKLSACGASIERIRA.

Residue 22–23 (KN) coordinates phosphoenolpyruvate. Arg102 lines the UDP-N-acetyl-alpha-D-glucosamine pocket. Cys126 (proton donor) is an active-site residue. The residue at position 126 (Cys126) is a 2-(S-cysteinyl)pyruvic acid O-phosphothioketal. Residues 131-135 (RPVDL), Asp316, and Ile338 each bind UDP-N-acetyl-alpha-D-glucosamine.

It belongs to the EPSP synthase family. MurA subfamily.

It is found in the cytoplasm. The catalysed reaction is phosphoenolpyruvate + UDP-N-acetyl-alpha-D-glucosamine = UDP-N-acetyl-3-O-(1-carboxyvinyl)-alpha-D-glucosamine + phosphate. It functions in the pathway cell wall biogenesis; peptidoglycan biosynthesis. Cell wall formation. Adds enolpyruvyl to UDP-N-acetylglucosamine. This chain is UDP-N-acetylglucosamine 1-carboxyvinyltransferase, found in Nitrobacter winogradskyi (strain ATCC 25391 / DSM 10237 / CIP 104748 / NCIMB 11846 / Nb-255).